The sequence spans 101 residues: Small ribosomal subunit protein uS10 (101 aa).

It belongs to the universal ribosomal protein uS10 family. Part of the 30S ribosomal subunit.

Functionally, involved in the binding of tRNA to the ribosomes. The protein is Small ribosomal subunit protein uS10 of Phocaeicola vulgatus (strain ATCC 8482 / DSM 1447 / JCM 5826 / CCUG 4940 / NBRC 14291 / NCTC 11154) (Bacteroides vulgatus).